We begin with the raw amino-acid sequence, 418 residues long: MGEEGTGGTVHLLCLAASSGVPLFCRSSRGGAPARQQLPFSVIGSLNGVHMFGQNLEVQLSSARTENTTVVWKSFHDSITLIVLSSEVGISELRLERLLQMVFGAMVLLVGLEELTNIRNVERLKKDLRASYCLIDSFLGDSELIGDLTQCVDCVIPPEGSLLQEALSGFAEAAGTTFVSLVVSGRVVAATEGWWRLGTPEAVLLPWLVGSLPPQTARDYPVYLPHGSPTVPHRLLTLTLLPSLELCLLCGPSPPLSQLYPQLLERWWQPLLDPLRACLPLGPRALPSGFPLHTDILGLLLLHLELKRCLFTVEPLGDKEPSPEQRRRLLRNFYTLVTSTHFPPEPGPPEKTEDEVYQAQLPRACYLVLGTEEPGTGVRLVALQLGLRRLLLLLSPQSPTHGLRSLATHTLHALTPLL.

Belongs to the fuzzy family. In terms of assembly, component of the CPLANE (ciliogenesis and planar polarity effectors) complex, composed of INTU, FUZ and WDPCP. Interacts with CPLANE2. Interacts with CPLANE1.

The protein resides in the cytoplasm. It localises to the cytoskeleton. Its subcellular location is the cilium basal body. In terms of biological role, probable planar cell polarity effector involved in cilium biogenesis. May regulate protein and membrane transport to the cilium. Proposed to function as core component of the CPLANE (ciliogenesis and planar polarity effectors) complex involved in the recruitment of peripheral IFT-A proteins to basal bodies. May regulate the morphogenesis of hair follicles which depends on functional primary cilia. Binds phosphatidylinositol 3-phosphate with highest affinity, followed by phosphatidylinositol 4-phosphate and phosphatidylinositol 5-phosphate. This chain is Protein fuzzy homolog (FUZ), found in Homo sapiens (Human).